An 897-amino-acid polypeptide reads, in one-letter code: MSVTRGHKSTPSLLLLFLSVLTSLLAAIPVLQANAPSAGPGVRILRPPESTVAPSGDEVVFVCETSLPPEHFEWSYASTRSHAPRFKYLKSSSAKNNSNITITNDNDISKLRVIVRPETLGEYRCVAWFGPLAVTSTTARLELATISGDKIAQRSNWRVAAGNTVLWQCGQVVSNPAPTWSFYYNDIEMPAASTLSDSSGTLLLPHVSTASSGTYTCVATNTASGQRLAMPRRLELQVPSAALPSAAPALLPGQSVRTEVLARIGETVLLLCPGVGYPPPTAVWSSPDVTGAVYNNRTRVLPYGLQIGGLQPKDTGTYICYLDNGIRPALEHYIQLVVQQAPRIVRPPSANLTNEGEFMVLECAATGTPTPKIYWLLNGENSVYDTESELPANGSLILRRVQKRHAGCVQCFARNVLGEDSAGTLLQVNPTQIQAGDGMGTGGMGRSSNRNAHNRKQKQMVPPSAPNVTRLSDESVMLRWHVVKNDGLHIQFFKVQYRMTDSGKRKSWQTTNENIPYGKQRHDSDEAVRNFTSSVTGLRPDHSYRFRIMAVYSNNDNKESNTSGKFFLQRGAALAPLPVPELLDIKEYSQTAVMLHWHLPSDADEQLISGYYAYYRPSASAGEYLKATIDGAKARSALISALEPGTIYEFKLQSFSAMAASEFSSLKQGRTQRPRSSTTAQPTMHTVDTTTPTHNETFNMNPLLTGTISGGALLILLVISACLCLCKRRHSRGDNSQNKPRLAELREDFVPLNTCSPNKPRTRHIHITLNPLAQQQQQQLQQQHQQDEKDSQDNELGYFQRQPVVYDAETLGFNGLARMSSSSLRRSQRTLERAAAGGGSGGNNNNLNQATDASLAASLDSPRLQASNKPGRVILKRSRLSSRSENLSSGSLNSVGV.

Positions 1–26 (MSVTRGHKSTPSLLLLFLSVLTSLLA) are cleaved as a signal peptide. The Extracellular segment spans residues 27–702 (AIPVLQANAP…THNETFNMNP (676 aa)). 4 Ig-like C2-type domains span residues 40–147 (PGVR…ATIS), 148–235 (GDKI…RRLE), 244–336 (PSAA…YIQL), and 342–429 (PRIV…LQVN). 3 disulfides stabilise this stretch: C63/C125, C169/C217, and C272/C320. Residues N96 and N99 are each glycosylated (N-linked (GlcNAc...) asparagine). Residues N296, N351, N393, and N467 are each glycosylated (N-linked (GlcNAc...) asparagine). C363 and C411 are disulfide-bonded. Residues 434 to 468 (QAGDGMGTGGMGRSSNRNAHNRKQKQMVPPSAPNV) form a disordered region. Fibronectin type-III domains follow at residues 462 to 571 (PPSA…LQRG) and 579 to 674 (VPEL…TQRP). Residues R498, K504, and K506 each coordinate heparin. A glycan (N-linked (GlcNAc...) asparagine) is linked at N530. R545 provides a ligand contact to heparin. N561 carries an N-linked (GlcNAc...) asparagine glycan. A compositionally biased stretch (polar residues) spans 666-682 (LKQGRTQRPRSSTTAQP). The interval 666–694 (LKQGRTQRPRSSTTAQPTMHTVDTTTPTH) is disordered. Over residues 683 to 694 (TMHTVDTTTPTH) the composition is skewed to low complexity. N-linked (GlcNAc...) asparagine glycosylation occurs at N695. A helical transmembrane segment spans residues 703-723 (LLTGTISGGALLILLVISACL). At 724-897 (CLCKRRHSRG…SSGSLNSVGV (174 aa)) the chain is on the cytoplasmic side. 2 disordered regions span residues 773–793 (AQQQ…DSQD) and 819–849 (MSSS…NLNQ). Over residues 774–784 (QQQQQQLQQQH) the composition is skewed to low complexity.

This sequence belongs to the immunoglobulin superfamily. IHOG family. As to quaternary structure, homodimer. Heterotetramer; 2 iHog chains bind 2 hh chains when facilitated by heparin, heparin is required to promote high-affinity interactions between hh and iHog.

The protein localises to the membrane. Its function is as follows. Mediates response to the active Hedgehog (Hh) protein signal in embryos, functioning upstream or at the level of patched (ptc). The polypeptide is Interference hedgehog (Drosophila mojavensis (Fruit fly)).